A 569-amino-acid polypeptide reads, in one-letter code: Probable pyruvate decarboxylase Pdc101 (569 aa).

2 residues coordinate substrate: aspartate 33 and histidine 120. Serine 233 is subject to Phosphoserine. Residues 396–478 form a thiamine pyrophosphate binding region; that stretch reads DSWFNGLQMK…FLLNNRGYTI (83 aa). Mg(2+)-binding residues include aspartate 446, asparagine 473, and glycine 475. Glutamate 479 contributes to the substrate binding site. Threonine 521 carries the phosphothreonine modification. Serine 522 carries the phosphoserine modification.

It belongs to the TPP enzyme family. As to quaternary structure, homotetramer. The cofactor is a metal cation. Thiamine diphosphate serves as cofactor.

The catalysed reaction is a 2-oxocarboxylate + H(+) = an aldehyde + CO2. The protein is Probable pyruvate decarboxylase Pdc101 (pdc101) of Schizosaccharomyces pombe (strain 972 / ATCC 24843) (Fission yeast).